The primary structure comprises 149 residues: Decarboxylase AgnL1 (149 aa).

The EthD domain occupies 30–125; sequence PGMSEEDYRH…VGDHEKFADT (96 aa).

Belongs to the tpcK family.

It catalyses the reaction atrochrysone carboxylate + H(+) = atrochrysone + CO2. The protein operates within secondary metabolite biosynthesis. Functionally, decarboxylase; part of the gene cluster that mediates the biosynthesis of agnestins, dihydroxy-xanthone metabolites. The pathway begins with the assembly and cyclization of atrochrysone thioester by the non-reducing polyketide synthase Agnpks1. The atrochrysone carboxyl ACP thioesterase AgnL7 then breaks the thioester bond and releases the atrochrysone carboxylic acid as the first enzyme-free intermediate. The decarboxylase AgnL1 then catalyzes the concerted decarboxylation-elimination required to convert atochrysone carboxylic acid into emodin anthrone, which is further oxidized to emodin by the anthrone oxygenase AgnL2. Emodin then undergoes reduction catalyzed by the oxidoreductase AgnL4 to yield the dihydroquinone tautomer which is the substrate for reduction by the short chain dehydrogenase AgnL6 reduction to produce hydroxyketone, followed by AgnL8 dehydration and likely spontaneous autoxidation to chrysophanol. Baeyer-Villiger oxidation by the oxidase AgnL3 leads to monodictyphenone via cleavage of the C-10/C-10a bond of chrysophanol. Alternative cleavage at the C-4a/C-10 bond of chrysophanol also leads to the formation some cephalone F. Further conversion to agnestins A and B, requires reduction to dihydro-monodictyphenone, oxidation to agnestin C probably via an epoxide, and rearrangement to either agnestin A or agnestin B directly, although agnestin A or agnestin B can also interconvert. Within the cluster, AgnR1 is the only unassigned oxidoreductase present which could be involved in this conversion. However, AgnR1 seems not to be involved in this step, and thus genes involved in the proposed oxidation/reduction may be located elsewhere on the genome. Further agnestin A derivatives are probably formed by spontaneous decarboxylations, dehydrations and methanolysis reactions. The polypeptide is Decarboxylase AgnL1 (Paecilomyces divaricatus (Penicillium divaricatum)).